Consider the following 510-residue polypeptide: 2,3-bisphosphoglycerate-independent phosphoglycerate mutase (510 aa).

Mn(2+) contacts are provided by aspartate 13 and serine 63. Serine 63 serves as the catalytic Phosphoserine intermediate. Substrate contacts are provided by residues histidine 124, 154–155 (RD), arginine 186, arginine 192, 262–265 (RADR), and lysine 334. The Mn(2+) site is built by aspartate 401, histidine 405, aspartate 442, histidine 443, and histidine 461.

Belongs to the BPG-independent phosphoglycerate mutase family. As to quaternary structure, monomer. Mn(2+) serves as cofactor.

It catalyses the reaction (2R)-2-phosphoglycerate = (2R)-3-phosphoglycerate. The protein operates within carbohydrate degradation; glycolysis; pyruvate from D-glyceraldehyde 3-phosphate: step 3/5. In terms of biological role, catalyzes the interconversion of 2-phosphoglycerate and 3-phosphoglycerate. This Aliivibrio fischeri (strain ATCC 700601 / ES114) (Vibrio fischeri) protein is 2,3-bisphosphoglycerate-independent phosphoglycerate mutase.